The primary structure comprises 88 residues: Small ribosomal subunit protein uS15 (88 aa).

This sequence belongs to the universal ribosomal protein uS15 family. As to quaternary structure, part of the 30S ribosomal subunit. Forms a bridge to the 50S subunit in the 70S ribosome, contacting the 23S rRNA.

One of the primary rRNA binding proteins, it binds directly to 16S rRNA where it helps nucleate assembly of the platform of the 30S subunit by binding and bridging several RNA helices of the 16S rRNA. Its function is as follows. Forms an intersubunit bridge (bridge B4) with the 23S rRNA of the 50S subunit in the ribosome. This is Small ribosomal subunit protein uS15 from Syntrophus aciditrophicus (strain SB).